The following is a 337-amino-acid chain: Ornithine carbamoyltransferase, catabolic (337 aa).

Carbamoyl phosphate contacts are provided by residues 57-60, Q84, R108, and 135-138; these read STRT and HPTQ. L-ornithine-binding positions include N167, D231, and 235-236; that span reads SM. Residues 272–273 and R317 each bind carbamoyl phosphate; that span reads CL.

Belongs to the aspartate/ornithine carbamoyltransferase superfamily. OTCase family.

Its subcellular location is the cytoplasm. The enzyme catalyses carbamoyl phosphate + L-ornithine = L-citrulline + phosphate + H(+). Its pathway is amino-acid degradation; L-arginine degradation via ADI pathway; carbamoyl phosphate from L-arginine: step 2/2. In terms of biological role, reversibly catalyzes the transfer of the carbamoyl group from carbamoyl phosphate (CP) to the N(epsilon) atom of ornithine (ORN) to produce L-citrulline. The chain is Ornithine carbamoyltransferase, catabolic from Streptococcus suis (strain 89/1591).